A 295-amino-acid polypeptide reads, in one-letter code: Phosphatidylserine decarboxylase proenzyme (295 aa).

Active-site charge relay system; for autoendoproteolytic cleavage activity residues include Asp90 and Ser258. The Schiff-base intermediate with substrate; via pyruvic acid; for decarboxylase activity role is filled by Ser258. Position 258 is a pyruvic acid (Ser); by autocatalysis (Ser258).

Belongs to the phosphatidylserine decarboxylase family. PSD-B subfamily. Prokaryotic type I sub-subfamily. Heterodimer of a large membrane-associated beta subunit and a small pyruvoyl-containing alpha subunit. Pyruvate serves as cofactor. Post-translationally, is synthesized initially as an inactive proenzyme. Formation of the active enzyme involves a self-maturation process in which the active site pyruvoyl group is generated from an internal serine residue via an autocatalytic post-translational modification. Two non-identical subunits are generated from the proenzyme in this reaction, and the pyruvate is formed at the N-terminus of the alpha chain, which is derived from the carboxyl end of the proenzyme. The autoendoproteolytic cleavage occurs by a canonical serine protease mechanism, in which the side chain hydroxyl group of the serine supplies its oxygen atom to form the C-terminus of the beta chain, while the remainder of the serine residue undergoes an oxidative deamination to produce ammonia and the pyruvoyl prosthetic group on the alpha chain. During this reaction, the Ser that is part of the protease active site of the proenzyme becomes the pyruvoyl prosthetic group, which constitutes an essential element of the active site of the mature decarboxylase.

It is found in the cell membrane. The enzyme catalyses a 1,2-diacyl-sn-glycero-3-phospho-L-serine + H(+) = a 1,2-diacyl-sn-glycero-3-phosphoethanolamine + CO2. Its pathway is phospholipid metabolism; phosphatidylethanolamine biosynthesis; phosphatidylethanolamine from CDP-diacylglycerol: step 2/2. Functionally, catalyzes the formation of phosphatidylethanolamine (PtdEtn) from phosphatidylserine (PtdSer). In Blochmanniella pennsylvanica (strain BPEN), this protein is Phosphatidylserine decarboxylase proenzyme.